Reading from the N-terminus, the 191-residue chain is Cathelicidin-related antimicrobial peptide Na_CRAMP (191 aa).

An N-terminal signal peptide occupies residues 1 to 22 (MEGFFWKTLLVVGALTISGTSS). Residues 23-161 (FPHKPLTYEE…DQPKRVKRFK (139 aa)) constitute a propeptide that is removed on maturation. Disulfide bonds link Cys81/Cys92 and Cys103/Cys120. The tract at residues 126-154 (EEEQKQEEGNEEEKEVEKEEKEEDQKDQP) is disordered. Over residues 140 to 154 (EVEKEEKEEDQKDQP) the composition is skewed to basic and acidic residues.

The protein belongs to the cathelicidin family. In terms of tissue distribution, expressed by the venom gland.

The protein localises to the secreted. Its subcellular location is the target cell membrane. In terms of biological role, potent antimicrobial peptide against most of Gram-negative bacteria, some Gram-positive bacteria (Bacillus) and some fungi. Adopts an amphipathic alpha helical conformation, that may allow to partition into the target membrane. No hemolytic and cytotoxic activities have been observed on mammalian cells. The polypeptide is Cathelicidin-related antimicrobial peptide Na_CRAMP (Naja atra (Chinese cobra)).